The primary structure comprises 134 residues: Small ribosomal subunit protein uS9 (134 aa).

Residues 109–134 (DARRTEPHKPSKSSKGPRAKRQKSYR) are disordered. Basic residues predominate over residues 118–134 (PSKSSKGPRAKRQKSYR).

Belongs to the universal ribosomal protein uS9 family.

The chain is Small ribosomal subunit protein uS9 from Methanococcus maripaludis (strain C5 / ATCC BAA-1333).